Here is a 277-residue protein sequence, read N- to C-terminus: Orotidine 5'-phosphate decarboxylase (277 aa).

K93 serves as the catalytic Proton donor.

It belongs to the OMP decarboxylase family. Type 2 subfamily.

It carries out the reaction orotidine 5'-phosphate + H(+) = UMP + CO2. It participates in pyrimidine metabolism; UMP biosynthesis via de novo pathway; UMP from orotate: step 2/2. In Haloarcula marismortui (strain ATCC 43049 / DSM 3752 / JCM 8966 / VKM B-1809) (Halobacterium marismortui), this protein is Orotidine 5'-phosphate decarboxylase.